The following is a 109-amino-acid chain: Thiosulfate sulfurtransferase GlpE (109 aa).

The region spanning 16–104 (REQGAVVVDI…WRTTYPAEIS (89 aa)) is the Rhodanese domain. Cysteine 64 functions as the Cysteine persulfide intermediate in the catalytic mechanism.

This sequence belongs to the GlpE family.

The protein localises to the cytoplasm. It catalyses the reaction thiosulfate + hydrogen cyanide = thiocyanate + sulfite + 2 H(+). The catalysed reaction is thiosulfate + [thioredoxin]-dithiol = [thioredoxin]-disulfide + hydrogen sulfide + sulfite + 2 H(+). Its function is as follows. Transferase that catalyzes the transfer of sulfur from thiosulfate to thiophilic acceptors such as cyanide or dithiols. May function in a CysM-independent thiosulfate assimilation pathway by catalyzing the conversion of thiosulfate to sulfite, which can then be used for L-cysteine biosynthesis. The protein is Thiosulfate sulfurtransferase GlpE of Pseudomonas fluorescens (strain SBW25).